Reading from the N-terminus, the 404-residue chain is S-adenosylmethionine synthase (404 aa).

Positions 1-13 (MSHSRYFFTSESV) are enriched in polar residues. Residues 1 to 20 (MSHSRYFFTSESVSEGHPDK) are disordered. Position 17 (His17) interacts with ATP. Asp19 provides a ligand contact to Mg(2+). Glu45 is a K(+) binding site. L-methionine contacts are provided by Glu58 and Gln101. The tract at residues 101–111 (QSPDINRGVDR) is flexible loop. ATP-binding positions include 172–174 (DSK), 246–247 (RF), Asp255, 261–262 (RK), Ala278, and Lys282. Position 255 (Asp255) interacts with L-methionine. Lys286 contributes to the L-methionine binding site.

This sequence belongs to the AdoMet synthase family. Homotetramer; dimer of dimers. It depends on Mg(2+) as a cofactor. Requires K(+) as cofactor.

Its subcellular location is the cytoplasm. It catalyses the reaction L-methionine + ATP + H2O = S-adenosyl-L-methionine + phosphate + diphosphate. It participates in amino-acid biosynthesis; S-adenosyl-L-methionine biosynthesis; S-adenosyl-L-methionine from L-methionine: step 1/1. Its function is as follows. Catalyzes the formation of S-adenosylmethionine (AdoMet) from methionine and ATP. The overall synthetic reaction is composed of two sequential steps, AdoMet formation and the subsequent tripolyphosphate hydrolysis which occurs prior to release of AdoMet from the enzyme. This is S-adenosylmethionine synthase from Chlorobaculum parvum (strain DSM 263 / NCIMB 8327) (Chlorobium vibrioforme subsp. thiosulfatophilum).